The primary structure comprises 509 residues: Maturase K (509 aa).

The protein belongs to the intron maturase 2 family. MatK subfamily.

It is found in the plastid. Its function is as follows. Usually encoded in the trnK tRNA gene intron. Probably assists in splicing its own and other chloroplast group II introns. This Castilleja linariifolia (Wyoming Indian paintbrush) protein is Maturase K.